The primary structure comprises 255 residues: Pimeloyl-[acyl-carrier protein] methyl ester esterase (255 aa).

Positions 16–242 (LVLLHGWGMN…SSHAPFITEP (227 aa)) constitute an AB hydrolase-1 domain. Residues Trp-22, 82–83 (SL), and 143–147 (FMALQ) each bind substrate. Catalysis depends on Ser-82, which acts as the Nucleophile. Residues Asp-207 and His-235 contribute to the active site. Substrate is bound at residue His-235.

This sequence belongs to the AB hydrolase superfamily. Carboxylesterase BioH family. As to quaternary structure, monomer.

It localises to the cytoplasm. It catalyses the reaction 6-carboxyhexanoyl-[ACP] methyl ester + H2O = 6-carboxyhexanoyl-[ACP] + methanol + H(+). It participates in cofactor biosynthesis; biotin biosynthesis. In terms of biological role, the physiological role of BioH is to remove the methyl group introduced by BioC when the pimeloyl moiety is complete. It allows to synthesize pimeloyl-ACP via the fatty acid synthetic pathway through the hydrolysis of the ester bonds of pimeloyl-ACP esters. The polypeptide is Pimeloyl-[acyl-carrier protein] methyl ester esterase (Vibrio vulnificus (strain CMCP6)).